We begin with the raw amino-acid sequence, 300 residues long: Ribosomal protein L11 methyltransferase (300 aa).

4 residues coordinate S-adenosyl-L-methionine: Thr152, Gly173, Asp195, and Asn234.

Belongs to the methyltransferase superfamily. PrmA family.

The protein resides in the cytoplasm. It carries out the reaction L-lysyl-[protein] + 3 S-adenosyl-L-methionine = N(6),N(6),N(6)-trimethyl-L-lysyl-[protein] + 3 S-adenosyl-L-homocysteine + 3 H(+). Its function is as follows. Methylates ribosomal protein L11. The polypeptide is Ribosomal protein L11 methyltransferase (Burkholderia vietnamiensis (strain G4 / LMG 22486) (Burkholderia cepacia (strain R1808))).